A 197-amino-acid polypeptide reads, in one-letter code: Phosphoheptose isomerase (197 aa).

One can recognise an SIS domain in the interval 34 to 196; that stretch reads MVQCLLGGNK…DRTLFPQDEQ (163 aa). 49-51 contributes to the substrate binding site; it reads NGG. Zn(2+)-binding residues include H58 and E62. Residues E62, 91–92, 117–119, S122, and Q172 each bind substrate; these read ND and STS. Zn(2+) contacts are provided by Q172 and H180.

Belongs to the SIS family. GmhA subfamily. Homotetramer. Requires Zn(2+) as cofactor.

It localises to the cytoplasm. The catalysed reaction is 2 D-sedoheptulose 7-phosphate = D-glycero-alpha-D-manno-heptose 7-phosphate + D-glycero-beta-D-manno-heptose 7-phosphate. The protein operates within carbohydrate biosynthesis; D-glycero-D-manno-heptose 7-phosphate biosynthesis; D-glycero-alpha-D-manno-heptose 7-phosphate and D-glycero-beta-D-manno-heptose 7-phosphate from sedoheptulose 7-phosphate: step 1/1. Catalyzes the isomerization of sedoheptulose 7-phosphate in D-glycero-D-manno-heptose 7-phosphate. This Shewanella piezotolerans (strain WP3 / JCM 13877) protein is Phosphoheptose isomerase.